A 189-amino-acid chain; its full sequence is Peptidyl-tRNA hydrolase (189 aa).

Tyrosine 14 lines the tRNA pocket. Histidine 19 (proton acceptor) is an active-site residue. Residues tyrosine 64, asparagine 66, and asparagine 112 each coordinate tRNA.

Belongs to the PTH family. Monomer.

The protein localises to the cytoplasm. The catalysed reaction is an N-acyl-L-alpha-aminoacyl-tRNA + H2O = an N-acyl-L-amino acid + a tRNA + H(+). Hydrolyzes ribosome-free peptidyl-tRNAs (with 1 or more amino acids incorporated), which drop off the ribosome during protein synthesis, or as a result of ribosome stalling. Its function is as follows. Catalyzes the release of premature peptidyl moieties from peptidyl-tRNA molecules trapped in stalled 50S ribosomal subunits, and thus maintains levels of free tRNAs and 50S ribosomes. In Dehalococcoides mccartyi (strain CBDB1), this protein is Peptidyl-tRNA hydrolase.